The chain runs to 391 residues: Na(+)/H(+) antiporter NhaA 1 (391 aa).

The next 11 membrane-spanning stretches (helical) occupy residues 25–45 (AGGI…NSPL), 56–76 (VWLG…IFFL), 98–118 (ALPG…YIAI), 128–148 (GWAI…SLLG), 157–177 (VFLA…IAFF), 180–200 (AGLN…LIVM), 208–228 (LLPY…SGVH), 264–284 (VAFA…LAGI), 297–317 (VALG…VLAI), 335–355 (GVAM…NLAF), and 364–384 (EVKV…IVLL).

It belongs to the NhaA Na(+)/H(+) (TC 2.A.33) antiporter family.

The protein localises to the cell inner membrane. It catalyses the reaction Na(+)(in) + 2 H(+)(out) = Na(+)(out) + 2 H(+)(in). Functionally, na(+)/H(+) antiporter that extrudes sodium in exchange for external protons. This Pseudomonas syringae pv. syringae (strain B728a) protein is Na(+)/H(+) antiporter NhaA 1.